A 287-amino-acid chain; its full sequence is Phosphatidylserine decarboxylase proenzyme (287 aa).

Active-site charge relay system; for autoendoproteolytic cleavage activity residues include D90, H147, and S252. The active-site Schiff-base intermediate with substrate; via pyruvic acid; for decarboxylase activity is the S252. Pyruvic acid (Ser); by autocatalysis is present on S252.

It belongs to the phosphatidylserine decarboxylase family. PSD-B subfamily. Prokaryotic type I sub-subfamily. In terms of assembly, heterodimer of a large membrane-associated beta subunit and a small pyruvoyl-containing alpha subunit. Requires pyruvate as cofactor. Post-translationally, is synthesized initially as an inactive proenzyme. Formation of the active enzyme involves a self-maturation process in which the active site pyruvoyl group is generated from an internal serine residue via an autocatalytic post-translational modification. Two non-identical subunits are generated from the proenzyme in this reaction, and the pyruvate is formed at the N-terminus of the alpha chain, which is derived from the carboxyl end of the proenzyme. The autoendoproteolytic cleavage occurs by a canonical serine protease mechanism, in which the side chain hydroxyl group of the serine supplies its oxygen atom to form the C-terminus of the beta chain, while the remainder of the serine residue undergoes an oxidative deamination to produce ammonia and the pyruvoyl prosthetic group on the alpha chain. During this reaction, the Ser that is part of the protease active site of the proenzyme becomes the pyruvoyl prosthetic group, which constitutes an essential element of the active site of the mature decarboxylase.

Its subcellular location is the cell membrane. It carries out the reaction a 1,2-diacyl-sn-glycero-3-phospho-L-serine + H(+) = a 1,2-diacyl-sn-glycero-3-phosphoethanolamine + CO2. It functions in the pathway phospholipid metabolism; phosphatidylethanolamine biosynthesis; phosphatidylethanolamine from CDP-diacylglycerol: step 2/2. Its function is as follows. Catalyzes the formation of phosphatidylethanolamine (PtdEtn) from phosphatidylserine (PtdSer). The sequence is that of Phosphatidylserine decarboxylase proenzyme from Pseudomonas putida (strain GB-1).